The chain runs to 182 residues: Small ribosomal subunit protein uS9 (182 aa).

This sequence belongs to the universal ribosomal protein uS9 family.

The polypeptide is Small ribosomal subunit protein uS9 (Corynebacterium efficiens (strain DSM 44549 / YS-314 / AJ 12310 / JCM 11189 / NBRC 100395)).